The chain runs to 365 residues: S-adenosylmethionine:tRNA ribosyltransferase-isomerase (365 aa).

It belongs to the QueA family. In terms of assembly, monomer.

It localises to the cytoplasm. It carries out the reaction 7-aminomethyl-7-carbaguanosine(34) in tRNA + S-adenosyl-L-methionine = epoxyqueuosine(34) in tRNA + adenine + L-methionine + 2 H(+). It functions in the pathway tRNA modification; tRNA-queuosine biosynthesis. Its function is as follows. Transfers and isomerizes the ribose moiety from AdoMet to the 7-aminomethyl group of 7-deazaguanine (preQ1-tRNA) to give epoxyqueuosine (oQ-tRNA). This Rickettsia africae (strain ESF-5) protein is S-adenosylmethionine:tRNA ribosyltransferase-isomerase.